The following is a 178-amino-acid chain: Large ribosomal subunit protein uL6 (178 aa).

The protein belongs to the universal ribosomal protein uL6 family. As to quaternary structure, part of the 50S ribosomal subunit.

In terms of biological role, this protein binds to the 23S rRNA, and is important in its secondary structure. It is located near the subunit interface in the base of the L7/L12 stalk, and near the tRNA binding site of the peptidyltransferase center. This chain is Large ribosomal subunit protein uL6, found in Micrococcus luteus (Micrococcus lysodeikticus).